A 194-amino-acid chain; its full sequence is NADH-quinone oxidoreductase subunit B (194 aa).

Residues Cys-73, Cys-74, Cys-138, and Cys-168 each coordinate [4Fe-4S] cluster.

Belongs to the complex I 20 kDa subunit family. In terms of assembly, NDH-1 is composed of 14 different subunits. Subunits NuoB, C, D, E, F, and G constitute the peripheral sector of the complex. [4Fe-4S] cluster serves as cofactor.

The protein resides in the cell inner membrane. It carries out the reaction a quinone + NADH + 5 H(+)(in) = a quinol + NAD(+) + 4 H(+)(out). In terms of biological role, NDH-1 shuttles electrons from NADH, via FMN and iron-sulfur (Fe-S) centers, to quinones in the respiratory chain. The immediate electron acceptor for the enzyme in this species is believed to be ubiquinone. Couples the redox reaction to proton translocation (for every two electrons transferred, four hydrogen ions are translocated across the cytoplasmic membrane), and thus conserves the redox energy in a proton gradient. This is NADH-quinone oxidoreductase subunit B from Rhizobium johnstonii (strain DSM 114642 / LMG 32736 / 3841) (Rhizobium leguminosarum bv. viciae).